Consider the following 228-residue polypeptide: UPF0173 metal-dependent hydrolase lwe1590 (228 aa).

It belongs to the UPF0173 family.

This is UPF0173 metal-dependent hydrolase lwe1590 from Listeria welshimeri serovar 6b (strain ATCC 35897 / DSM 20650 / CCUG 15529 / CIP 8149 / NCTC 11857 / SLCC 5334 / V8).